A 107-amino-acid chain; its full sequence is Iron-sulfur cluster assembly protein CyaY (107 aa).

The protein belongs to the frataxin family.

Involved in iron-sulfur (Fe-S) cluster assembly. May act as a regulator of Fe-S biogenesis. The sequence is that of Iron-sulfur cluster assembly protein CyaY from Thioalkalivibrio sulfidiphilus (strain HL-EbGR7).